The primary structure comprises 383 residues: UDP-N-acetylglucosamine 2-epimerase (383 aa).

This sequence belongs to the UDP-N-acetylglucosamine 2-epimerase family.

It carries out the reaction UDP-N-acetyl-alpha-D-glucosamine = UDP-N-acetyl-alpha-D-mannosamine. Its pathway is capsule biogenesis; capsule polysaccharide biosynthesis. In terms of biological role, non-hydrolyzing C2-epimerase involved in the biosynthesis of capsular polysaccharides. Catalyzes the C2 epimerization of UDP-N-acetylglucosamine (UDP-GlcNAc) to form UDP-N-acetylmannosamine (UDP-ManNAc). This is UDP-N-acetylglucosamine 2-epimerase from Campylobacter jejuni.